Consider the following 436-residue polypeptide: Trigger factor (436 aa).

In terms of domain architecture, PPIase FKBP-type spans 163 to 248 (GDRVTVDFEG…VKKIEAANLP (86 aa)).

It belongs to the FKBP-type PPIase family. Tig subfamily.

It is found in the cytoplasm. The enzyme catalyses [protein]-peptidylproline (omega=180) = [protein]-peptidylproline (omega=0). Its function is as follows. Involved in protein export. Acts as a chaperone by maintaining the newly synthesized protein in an open conformation. Functions as a peptidyl-prolyl cis-trans isomerase. The sequence is that of Trigger factor from Delftia acidovorans (strain DSM 14801 / SPH-1).